Consider the following 392-residue polypeptide: Chorismate synthase (392 aa).

Arginine 39 and arginine 45 together coordinate NADP(+). Residues 131 to 133 (RSS), 255 to 256 (NA), glycine 300, 315 to 319 (KPIPT), and arginine 341 each bind FMN.

Belongs to the chorismate synthase family. In terms of assembly, homotetramer. FMNH2 is required as a cofactor.

The catalysed reaction is 5-O-(1-carboxyvinyl)-3-phosphoshikimate = chorismate + phosphate. It functions in the pathway metabolic intermediate biosynthesis; chorismate biosynthesis; chorismate from D-erythrose 4-phosphate and phosphoenolpyruvate: step 7/7. In terms of biological role, catalyzes the anti-1,4-elimination of the C-3 phosphate and the C-6 proR hydrogen from 5-enolpyruvylshikimate-3-phosphate (EPSP) to yield chorismate, which is the branch point compound that serves as the starting substrate for the three terminal pathways of aromatic amino acid biosynthesis. This reaction introduces a second double bond into the aromatic ring system. The protein is Chorismate synthase of Leuconostoc citreum (strain KM20).